The following is a 152-amino-acid chain: Putative rho GDP-dissociation inhibitor 2 (152 aa).

The protein belongs to the Rho GDI family.

The protein resides in the cytoplasm. Functionally, regulates the GDP/GTP exchange reaction of the Rho proteins by inhibiting the dissociation of GDP from them, and the subsequent binding of GTP to them. This Dictyostelium discoideum (Social amoeba) protein is Putative rho GDP-dissociation inhibitor 2 (rdiB).